Here is a 127-residue protein sequence, read N- to C-terminus: Cuticle protein 4 (127 aa).

Gln1 carries the pyrrolidone carboxylic acid modification. 2 consecutive repeat copies span residues 31 to 39 and 84 to 92.

The sequence is that of Cuticle protein 4 from Blaberus craniifer (Death's head cockroach).